Consider the following 341-residue polypeptide: Lipoyl synthase (341 aa).

[4Fe-4S] cluster-binding residues include Cys85, Cys90, Cys96, Cys111, Cys115, Cys118, and Ser325. The region spanning 97 to 314 is the Radical SAM core domain; that stretch reads FSGGTATFMI…AEEGYKMGFK (218 aa).

This sequence belongs to the radical SAM superfamily. Lipoyl synthase family. [4Fe-4S] cluster serves as cofactor.

It is found in the cytoplasm. The enzyme catalyses [[Fe-S] cluster scaffold protein carrying a second [4Fe-4S](2+) cluster] + N(6)-octanoyl-L-lysyl-[protein] + 2 oxidized [2Fe-2S]-[ferredoxin] + 2 S-adenosyl-L-methionine + 4 H(+) = [[Fe-S] cluster scaffold protein] + N(6)-[(R)-dihydrolipoyl]-L-lysyl-[protein] + 4 Fe(3+) + 2 hydrogen sulfide + 2 5'-deoxyadenosine + 2 L-methionine + 2 reduced [2Fe-2S]-[ferredoxin]. The protein operates within protein modification; protein lipoylation via endogenous pathway; protein N(6)-(lipoyl)lysine from octanoyl-[acyl-carrier-protein]: step 2/2. Catalyzes the radical-mediated insertion of two sulfur atoms into the C-6 and C-8 positions of the octanoyl moiety bound to the lipoyl domains of lipoate-dependent enzymes, thereby converting the octanoylated domains into lipoylated derivatives. This is Lipoyl synthase from Pseudomonas fluorescens (strain SBW25).